The primary structure comprises 131 residues: Glycine cleavage system H protein (131 aa).

Residues 24 to 106 enclose the Lipoyl-binding domain; that stretch reads IATLGISAFA…HGEGWLLKVR (83 aa). The residue at position 65 (Lys65) is an N6-lipoyllysine.

It belongs to the GcvH family. As to quaternary structure, the glycine cleavage system is composed of four proteins: P, T, L and H. Requires (R)-lipoate as cofactor.

The glycine cleavage system catalyzes the degradation of glycine. The H protein shuttles the methylamine group of glycine from the P protein to the T protein. The polypeptide is Glycine cleavage system H protein (Microcystis aeruginosa (strain NIES-843 / IAM M-2473)).